We begin with the raw amino-acid sequence, 104 residues long: Integration host factor subunit alpha (104 aa).

The protein belongs to the bacterial histone-like protein family. Heterodimer of an alpha and a beta chain.

Its function is as follows. This protein is one of the two subunits of integration host factor, a specific DNA-binding protein that functions in genetic recombination as well as in transcriptional and translational control. The protein is Integration host factor subunit alpha of Methylobacterium sp. (strain 4-46).